A 424-amino-acid polypeptide reads, in one-letter code: Tyrosine--tRNA ligase (424 aa).

Position 37 (tyrosine 37) interacts with L-tyrosine. A 'HIGH' region motif is present at residues 42–51 (PTADSLHLGH). Position 144 is an N6-acetyllysine (lysine 144). Residues tyrosine 175 and glutamine 179 each contribute to the L-tyrosine site. Residues 235-239 (KFGKT) carry the 'KMSKS' region motif. Position 238 (lysine 238) interacts with ATP. The S4 RNA-binding domain occupies 357-414 (ADLMQALVDSELQPSRGQARKTIASNAITINGEKQSDPEYFFKEEDRLFGRFTLLRRG).

This sequence belongs to the class-I aminoacyl-tRNA synthetase family. TyrS type 1 subfamily. Homodimer.

The protein resides in the cytoplasm. The enzyme catalyses tRNA(Tyr) + L-tyrosine + ATP = L-tyrosyl-tRNA(Tyr) + AMP + diphosphate + H(+). Functionally, catalyzes the attachment of tyrosine to tRNA(Tyr) in a two-step reaction: tyrosine is first activated by ATP to form Tyr-AMP and then transferred to the acceptor end of tRNA(Tyr). The sequence is that of Tyrosine--tRNA ligase from Escherichia coli (strain K12 / DH10B).